A 260-amino-acid polypeptide reads, in one-letter code: Protein-L-isoaspartate O-methyltransferase (260 aa).

The segment at 1–27 (MKSPVAGAVLDPSTPPPTTGTSWRWPG) is disordered. Serine 92 is an active-site residue.

It belongs to the methyltransferase superfamily. L-isoaspartyl/D-aspartyl protein methyltransferase family.

The protein localises to the cytoplasm. It catalyses the reaction [protein]-L-isoaspartate + S-adenosyl-L-methionine = [protein]-L-isoaspartate alpha-methyl ester + S-adenosyl-L-homocysteine. Functionally, catalyzes the methyl esterification of L-isoaspartyl residues in peptides and proteins that result from spontaneous decomposition of normal L-aspartyl and L-asparaginyl residues. It plays a role in the repair and/or degradation of damaged proteins. This is Protein-L-isoaspartate O-methyltransferase (pcm) from Aeropyrum pernix (strain ATCC 700893 / DSM 11879 / JCM 9820 / NBRC 100138 / K1).